A 920-amino-acid polypeptide reads, in one-letter code: DNA ligase (920 aa).

NAD(+) contacts are provided by residues 90 to 94 (DAAYD), 139 to 140 (SL), and glutamate 173. The active-site N6-AMP-lysine intermediate is lysine 175. 4 residues coordinate NAD(+): arginine 196, glutamate 235, lysine 360, and lysine 384. The Zn(2+) site is built by cysteine 481, cysteine 484, cysteine 500, and cysteine 506. The disordered stretch occupies residues 659–691 (RAQGEAAIESAETQGDTASETTGAPTGAEAPLG). The segment covering 669 to 682 (AETQGDTASETTGA) has biased composition (polar residues). Residues 839–920 (SLPQTLAGKT…FAQLLATGTI (82 aa)) enclose the BRCT domain.

This sequence belongs to the NAD-dependent DNA ligase family. LigA subfamily. Mg(2+) is required as a cofactor. Mn(2+) serves as cofactor.

It catalyses the reaction NAD(+) + (deoxyribonucleotide)n-3'-hydroxyl + 5'-phospho-(deoxyribonucleotide)m = (deoxyribonucleotide)n+m + AMP + beta-nicotinamide D-nucleotide.. Functionally, DNA ligase that catalyzes the formation of phosphodiester linkages between 5'-phosphoryl and 3'-hydroxyl groups in double-stranded DNA using NAD as a coenzyme and as the energy source for the reaction. It is essential for DNA replication and repair of damaged DNA. The polypeptide is DNA ligase (Bifidobacterium longum (strain NCC 2705)).